We begin with the raw amino-acid sequence, 628 residues long: Chaperone protein HtpG (628 aa).

An a; substrate-binding region spans residues 1 to 337; sequence MSEKKYTFET…SADLPLNVSR (337 aa). The segment at 338–554 is b; sequence EILQHNKVID…DYGMSLHMQK (217 aa). A c region spans residues 555 to 628; the sequence is MMEEAGQGFM…FVKLVNKYIR (74 aa).

Belongs to the heat shock protein 90 family. In terms of assembly, homodimer.

The protein resides in the cytoplasm. Functionally, molecular chaperone. Has ATPase activity. In Francisella tularensis subsp. novicida (strain U112), this protein is Chaperone protein HtpG.